Here is a 485-residue protein sequence, read N- to C-terminus: Terminase, large subunit (485 aa).

ADP-binding positions include 17-22 (KPHHVQ), 40-45 (QSGKSE), and arginine 79. The interval 22–197 (QLAIHRSTAK…EFFLMGWRGG (176 aa)) is ATPase activity. ATP is bound by residues glutamine 97 and glutamine 99. Positions 125-131 (SEFRGKS) match the Walker A motif motif. The Walker B motif signature appears at 145-150 (FVILDE). The For ATPase activity role is filled by glutamate 150. Residues 256-438 (SNSVFSGLDM…DIVMSLALAY (183 aa)) are nuclease. Positions 294, 347, and 429 each coordinate Mg(2+).

The protein belongs to the Tequatrovirus large terminase family. As to quaternary structure, interacts with the terminase small subunit; the active complex is composed of a pentamer of terminase large subunits and a dodecamer of terminase small subunits. Interacts with the portal protein. It depends on Mg(2+) as a cofactor.

Functionally, the terminase large subunit acts as an ATP driven molecular motor necessary for viral DNA translocation into empty capsids and as an endonuclease that cuts the viral genome to initiate and to end a packaging reaction The terminase lies at a unique vertex of the procapsid and is composed of two subunits, a small terminase subunit involved in viral DNA recognition (packaging sequence), and a large terminase subunit possessing endonucleolytic and ATPase activities. Both terminase subunits heterooligomerize and are docked on the portal protein to form the packaging machine. The terminase large subunit exhibits endonuclease activity and cleaves the viral genome concatemer. Once the capsid is packaged with the DNA, the terminase complex is substituted by the tail. The polypeptide is Terminase, large subunit (Thermus thermophilus (Thermus thermophilus phage P23-45)).